A 225-amino-acid polypeptide reads, in one-letter code: 3-demethoxyubiquinol 3-hydroxylase (225 aa).

Positions 1–11 (MSVASTSSGFT) are enriched in polar residues. The segment at 1-20 (MSVASTSSGFTPFSRRRGPL) is disordered. Positions 74, 104, 107, 156, 188, and 191 each coordinate Fe cation. The disordered stretch occupies residues 181–203 (VSQMKDDEAQHRASAERAGGVPL). Residues 184-195 (MKDDEAQHRASA) show a composition bias toward basic and acidic residues.

The protein belongs to the COQ7 family. Fe cation serves as cofactor.

Its subcellular location is the cell membrane. It catalyses the reaction a 5-methoxy-2-methyl-3-(all-trans-polyprenyl)benzene-1,4-diol + AH2 + O2 = a 3-demethylubiquinol + A + H2O. It functions in the pathway cofactor biosynthesis; ubiquinone biosynthesis. Functionally, catalyzes the hydroxylation of 2-nonaprenyl-3-methyl-6-methoxy-1,4-benzoquinol during ubiquinone biosynthesis. The sequence is that of 3-demethoxyubiquinol 3-hydroxylase from Bordetella petrii (strain ATCC BAA-461 / DSM 12804 / CCUG 43448).